Here is a 436-residue protein sequence, read N- to C-terminus: Cyclic GMP-AMP synthase (436 aa).

Residue 112-117 participates in GTP binding; sequence QGSFQY. Residues D131 and D133 each coordinate Mg(2+). An ATP-binding site is contributed by R182. Position 193 (D193) interacts with Mg(2+). S259 is a binding site for ATP. 3 residues coordinate GTP: K287, S301, and D348. Disordered regions lie at residues 339 to 358 and 417 to 436; these read RGVE…PSYK and AQEP…MVSG. The segment covering 419 to 436 has biased composition (polar residues); the sequence is EPSSASKPEKISSTMVSG. G436 participates in a covalent cross-link: Glycyl lysine isopeptide (Gly-Lys) (interchain with K-? in acceptor proteins).

The protein belongs to the CD-NTase family. A01 subfamily. Monomer. Interacts with Cap2 in the presence and absence of phage T2. A Cap2 dimer is bound on either side by a DncV monomer. It depends on Mg(2+) as a cofactor. In bacteria expressing capV-cdnD-cap2, this protein is conjugated to a number of other proteins (by Cap2 via this protein's C-terminal Gly residue), many of which are involved in metabolism. More conjugated protein is found in the absence of Cap3.

The enzyme catalyses GTP + ATP = 3',3'-cGAMP + 2 diphosphate. With respect to regulation, primed for activation by Cap2 which conjugates it to cellular proteins; priming is target protein-specific (green fluorescent protein does not activate the enzyme), but which protein(s) activate is unclear. Enzymatic activity of DncV is inhibited by folate-like molecules, such as 5-methyltetrahydrofolate di-glutamate and 5-methyltetrahydrofolate, suggesting the existence of a signaling pathway that links folate-like metabolism cofactors to the regulation of cyclic dinucleotide second messenger synthesis. Lacks a regulatory loop and is constitutively activated. In terms of biological role, cyclic nucleotide synthase (second messenger synthase) of a CBASS antivirus system. CBASS (cyclic oligonucleotide-based antiphage signaling system) provides immunity against bacteriophages. The CD-NTase protein (DncV, this protein) synthesizes cyclic nucleotides in response to infection; these serve as specific second messenger signals. The signals activate a diverse range of effectors, leading to bacterial cell death and thus abortive phage infection. A type II-A(GA) CBASS system. Functionally, catalyzes the synthesis of 3',3'-cyclic GMP-AMP (cGAMP), a second messenger in cell signal transduction, from GTP and ATP in response to phage infection. Also able to produce c-di-AMP and c-di-GMP from ATP and GTP, respectively; however, cGAMP is the dominant molecule produced by DncV in vivo, contrary to the 2'3'-cGAMP produced by eukaryotes. Is required for efficient V.cholerae intestinal colonization, and down-regulates the colonization-influencing process of chemotaxis. Is not active with dATP, TTP, UTP or CTP. Its product controls the activity of cGAMP-activated phospholipase CapV, a patatin-like lipase that is a direct cGAMP receptor encoded in the dncV operon. Its function is as follows. Protects E.coli against phage infection. When the CBASS operon (capV-dncV-cap2-cap3) is introduced in E.coli MG1655 there is about 100-fold protection against phages P1 and T2. When the operon is introduced in E.coli MG1655 there is a more than 10(3) decrease in the efficiency of T2 plaque formation. Protects 100-fold against phage T5, offers no protection against T7. When the operon is introduced in E.coli MG1655 it protects against phages T2, T4, T5 and T6. Another paper shows the operon confers protection against phages P1, T2, T5 and T6 but not T4 or lambda. This chain is Cyclic GMP-AMP synthase, found in Vibrio cholerae serotype O1 (strain ATCC 39315 / El Tor Inaba N16961).